The following is a 550-amino-acid chain: CTP synthase (550 aa).

Positions 1–271 (MTRYIFITGG…DAEVLDVFGM (271 aa)) are amidoligase domain. CTP is bound at residue serine 13. Residue serine 13 coordinates UTP. ATP is bound at residue 14 to 19 (SLGKGL). Tyrosine 54 provides a ligand contact to L-glutamine. Residue aspartate 71 participates in ATP binding. Residues aspartate 71 and glutamate 145 each contribute to the Mg(2+) site. CTP-binding positions include 152-154 (DIE), 192-197 (KTKPTQ), and lysine 228. UTP contacts are provided by residues 192-197 (KTKPTQ) and lysine 228. Positions 297–549 (TIAVVGKYTV…IAAAKEQGRL (253 aa)) constitute a Glutamine amidotransferase type-1 domain. Residue glycine 361 participates in L-glutamine binding. The active-site Nucleophile; for glutamine hydrolysis is the cysteine 388. L-glutamine is bound by residues 389-392 (FGMQ), glutamate 412, and arginine 477. Residues histidine 522 and glutamate 524 contribute to the active site.

This sequence belongs to the CTP synthase family. In terms of assembly, homotetramer.

It carries out the reaction UTP + L-glutamine + ATP + H2O = CTP + L-glutamate + ADP + phosphate + 2 H(+). It catalyses the reaction L-glutamine + H2O = L-glutamate + NH4(+). The enzyme catalyses UTP + NH4(+) + ATP = CTP + ADP + phosphate + 2 H(+). The protein operates within pyrimidine metabolism; CTP biosynthesis via de novo pathway; CTP from UDP: step 2/2. With respect to regulation, allosterically activated by GTP, when glutamine is the substrate; GTP has no effect on the reaction when ammonia is the substrate. The allosteric effector GTP functions by stabilizing the protein conformation that binds the tetrahedral intermediate(s) formed during glutamine hydrolysis. Inhibited by the product CTP, via allosteric rather than competitive inhibition. Catalyzes the ATP-dependent amination of UTP to CTP with either L-glutamine or ammonia as the source of nitrogen. Regulates intracellular CTP levels through interactions with the four ribonucleotide triphosphates. This Caulobacter sp. (strain K31) protein is CTP synthase.